The primary structure comprises 399 residues: Elongation factor Tu (399 aa).

One can recognise a tr-type G domain in the interval 10 to 204; sequence KPHVNIGTIG…AVDASIPEPE (195 aa). Positions 19–26 are G1; sequence GHVDHGKT. 19 to 26 is a GTP binding site; that stretch reads GHVDHGKT. Thr26 is a binding site for Mg(2+). Residues 60-64 are G2; the sequence is GITIN. The segment at 81 to 84 is G3; sequence DCPG. Residues 81–85 and 136–139 each bind GTP; these read DCPGH and NKCD. The segment at 136–139 is G4; sequence NKCD. Residues 174–176 are G5; sequence SGL.

The protein belongs to the TRAFAC class translation factor GTPase superfamily. Classic translation factor GTPase family. EF-Tu/EF-1A subfamily. Monomer.

It is found in the cytoplasm. The enzyme catalyses GTP + H2O = GDP + phosphate + H(+). Functionally, GTP hydrolase that promotes the GTP-dependent binding of aminoacyl-tRNA to the A-site of ribosomes during protein biosynthesis. In Prochlorococcus marinus (strain MIT 9312), this protein is Elongation factor Tu.